Here is a 208-residue protein sequence, read N- to C-terminus: N-(5'-phosphoribosyl)anthranilate isomerase (208 aa).

Belongs to the TrpF family.

The enzyme catalyses N-(5-phospho-beta-D-ribosyl)anthranilate = 1-(2-carboxyphenylamino)-1-deoxy-D-ribulose 5-phosphate. The protein operates within amino-acid biosynthesis; L-tryptophan biosynthesis; L-tryptophan from chorismate: step 3/5. This Deinococcus radiodurans (strain ATCC 13939 / DSM 20539 / JCM 16871 / CCUG 27074 / LMG 4051 / NBRC 15346 / NCIMB 9279 / VKM B-1422 / R1) protein is N-(5'-phosphoribosyl)anthranilate isomerase.